The following is an 82-amino-acid chain: Turripeptide IX-07 (82 aa).

Residues 1–21 (MGFYMLLTVALLLTSLMNVEA) form the signal peptide. The propeptide occupies 22-39 (TPVNQAERSALEKSGLGN). 3 disulfides stabilise this stretch: Cys-48-Cys-70, Cys-55-Cys-74, and Cys-60-Cys-81.

As to expression, expressed by the venom duct.

The protein resides in the secreted. The polypeptide is Turripeptide IX-07 (Gemmula speciosa (Splendid gem-turris)).